The following is a 435-amino-acid chain: Transcription activator AKTR-2 (435 aa).

The segment at residues 16–43 is a DNA-binding region (zn(2)-C6 fungal-type); that stretch reads CDFCTQSKLRCNKNKPSCRRCTIQQQVC. The segment at 49-103 is disordered; the sequence is RRTGRPPKHPRRADDSQETSGQHGHQDPMTSAPADSCEQQSSHLDLEGDDTDFTL. Basic residues predominate over residues 50–59; sequence RTGRPPKHPR.

It is found in the nucleus. In terms of biological role, transcription factor that regulates the expression of the gene clusters that mediate the biosynthesis of the host-selective toxins (HSTs) AK-toxins responsible for Japanese pear black spot disease by the Japanese pear pathotype. AK-toxins are esters of 9,10-epoxy 8-hydroxy 9-methyldecatrienoic acid (EDA). On cellular level, AK-toxins affect plasma membrane of susceptible cells and cause a sudden increase in loss of K(+) after a few minutes of toxin treatment. The polypeptide is Transcription activator AKTR-2 (Alternaria alternata (Alternaria rot fungus)).